The primary structure comprises 89 residues: Calsenilin isoform 4 (89 aa).

A disordered region spans residues 27 to 57 (SSRDAEDQGSREGIGWQPPGRSWAHTTEQEG).

As to expression, isoform 1 or isoform 4 (T+ forms) are expressed at equal levels with isoform 2 or isoform 3 (T- forms) in brain.

In terms of biological role, unknown for isoform 4. Csen is involved in calcium-dependent transcriptional repression, regulation of potassium channels, and perhaps in processing of PSEN2 and apoptosis. This is Calsenilin isoform 4 (Kcnip3) from Mus musculus (Mouse).